Consider the following 302-residue polypeptide: Acetylesterase (302 aa).

The N-terminal stretch at 1–21 is a signal peptide; sequence MGRFLTTTALALLATGGAATA. Asn-84 and Asn-101 each carry an N-linked (GlcNAc...) asparagine glycan.

The protein belongs to the carbohydrate esterase CE16 family.

Its subcellular location is the secreted. It catalyses the reaction an acetyl ester + H2O = an aliphatic alcohol + acetate + H(+). Functionally, acetyl esterase that acts as an exo-deacetylase. Liberates acetic acid from xylo-oligomers. This is Acetylesterase from Thermothelomyces thermophilus (Myceliophthora thermophila).